The primary structure comprises 263 residues: Probable 6-oxopurine nucleoside phosphorylase (263 aa).

Phosphate contacts are provided by residues T9, 49 to 50 (RH), and 82 to 83 (TA). M181 is a substrate binding site. T182 provides a ligand contact to phosphate. 205–207 (NYA) contributes to the substrate binding site.

It belongs to the PNP/MTAP phosphorylase family. MTAP subfamily. Homohexamer. Dimer of a homotrimer.

It catalyses the reaction a purine D-ribonucleoside + phosphate = a purine nucleobase + alpha-D-ribose 1-phosphate. It functions in the pathway purine metabolism; purine nucleoside salvage. In terms of biological role, purine nucleoside phosphorylase which is highly specific for 6-oxopurine nucleosides. Cleaves guanosine or inosine to respective bases and sugar-1-phosphate molecules. Involved in purine salvage. The protein is Probable 6-oxopurine nucleoside phosphorylase of Dictyoglomus turgidum (strain DSM 6724 / Z-1310).